The following is a 238-amino-acid chain: Putative pectate lyase X (238 aa).

The N-terminal stretch at 1-22 (MKYLLPTAAAGLLLLAAQPAMA) is a signal peptide. Positions 153, 188, and 192 each coordinate Ca(2+).

This sequence belongs to the polysaccharide lyase 1 family. Ca(2+) serves as cofactor.

The catalysed reaction is Eliminative cleavage of (1-&gt;4)-alpha-D-galacturonan to give oligosaccharides with 4-deoxy-alpha-D-galact-4-enuronosyl groups at their non-reducing ends.. Its pathway is glycan metabolism; pectin degradation; 2-dehydro-3-deoxy-D-gluconate from pectin: step 2/5. In terms of biological role, involved in maceration and soft-rotting of plant tissue. The polypeptide is Putative pectate lyase X (PEL X) (Pectobacterium carotovorum (Erwinia carotovora)).